The primary structure comprises 240 residues: 1-(5-phosphoribosyl)-5-[(5-phosphoribosylamino)methylideneamino] imidazole-4-carboxamide isomerase (240 aa).

Asp-10 acts as the Proton acceptor in catalysis. Asp-131 functions as the Proton donor in the catalytic mechanism.

Belongs to the HisA/HisF family.

It localises to the cytoplasm. It catalyses the reaction 1-(5-phospho-beta-D-ribosyl)-5-[(5-phospho-beta-D-ribosylamino)methylideneamino]imidazole-4-carboxamide = 5-[(5-phospho-1-deoxy-D-ribulos-1-ylimino)methylamino]-1-(5-phospho-beta-D-ribosyl)imidazole-4-carboxamide. It participates in amino-acid biosynthesis; L-histidine biosynthesis; L-histidine from 5-phospho-alpha-D-ribose 1-diphosphate: step 4/9. This Shouchella clausii (strain KSM-K16) (Alkalihalobacillus clausii) protein is 1-(5-phosphoribosyl)-5-[(5-phosphoribosylamino)methylideneamino] imidazole-4-carboxamide isomerase.